The following is a 303-amino-acid chain: Probable cell division protein WhiA (303 aa).

A DNA-binding region (H-T-H motif) is located at residues 272–303 (SIQQVADALEFPITKSGVNHRLRKINKIADDL).

It belongs to the WhiA family.

In terms of biological role, involved in cell division and chromosome segregation. This is Probable cell division protein WhiA from Streptococcus pyogenes serotype M12 (strain MGAS2096).